The sequence spans 142 residues: Transcriptional regulator MraZ (142 aa).

2 SpoVT-AbrB domains span residues 5 to 51 (ASSL…PRPE) and 77 to 120 (AMDV…DKAT).

Belongs to the MraZ family. In terms of assembly, forms oligomers.

The protein localises to the cytoplasm. The protein resides in the nucleoid. This is Transcriptional regulator MraZ from Acidovorax ebreus (strain TPSY) (Diaphorobacter sp. (strain TPSY)).